The sequence spans 1429 residues: MEGENSKSVHPILSHSTSVVSERASSSGVNGTNGGMKQVSPVSTARTSIARRPPSTVGSQTGSLVNAPPKRSSGIERFDHVTGTAENRPQTPSTKASVANVKPAGAAESAQNANLISSKSENVPEPAGEKVSMPEKQDLQSALPSDAVSNAVIGWKSIYHASDVDVHDHFANVLSALQWDSHRVEPSILETYSSYKLTGQWWQSTSILLAVSILSWIASKLWFRFFILFFIIITGTIVYGSCMISVRRNIREEVVQELSKKNGDVDYETMSWFNTLLQRFWMLNEPEISKSVSTSVEQSIAEYLPSFIKEAAFSTFTLGSKAPRIDRVRTHPPVERDVVLMDVDFSLTPNDNYDVNDSSLKCRVNSLISLVIKFGFGKYMFSFPITIKDLRLSGKLRIRWGLSSDYPFIQTASFSFLETPIVYANIRPIDIPFLDADIFYIPGIGQFVSEQLGLLLNSMVLWPNMFDYDLSAMMAGIASGTAVGVVGLKIYSARRGEVSDSSIDRKPSSFITVTTSGREHGRTPIRSNTFSPTFDTTIYVVINSLNDPLKLSLYDNSGKSPILVGTTYIDPRSLYERGFIGDIYQFLYNAVNVGSVAFDATFFPSLLPKKTMDGSKIEPPESSKGILNVNLGCVNNLTELTELTKKSSLKYVLYVDSKEVASKTIKFVDRTPISLQTNAYIENNKKSSIKVAVFDVKSPEKAIATVSVPLPELLHEGYDTFHFVENPKATIDIESFWTPVDVVEEKSAKTYIDNLVGVMRLSVIKANDLVNVELPTRKSDPYARVIVGNSVVARTVYTPNNLNPIWNEILYVPIMADTKTIDLEAMDYEESGNDRSLGYASINVQKYIRNAKRLDRSALASTVFGTSEVNALTLTSRKGQSVRGTISVNCDYRPCLRLNTDNSSKQSSENVQSATDPTTPAKDNSTSNAETSSITSVISVNEALQYPSGFALISIVSADLQDVGVDLRVFTDNAAFPFITTPIAKTKTPRWSSFGISMVRELQFSETTFQLTDGAKKDPKVVCEHSVKTLDLVSEALGRPYSVEIPGSNGQLNHVRLSITYMPVPMTLNPMESYINSGSLHFMLQDGQNLPIGDIRSSDPFVVLKLNGESAFKSKVIKKNLNPVWNEEADIVVQNRVLDVLELVCYDWDMGEKPDVLGTSNIDLLSLEPNVESQQSIKLDSKTGTINASLRFVPGWHRRKAVLDVTLADNFLHAANKGAKLVVGGVGAAGGLALAGVTTIGSVGSKAVTGVADGVTGTGKHIISGAKGISKMGMFRRSLEKNPSRSDLTTTQEASSSASVPPAIAPESANAALTSTIDKTTGAPELAQKKYKVYVGQGKNMPHKTIKIIVTDNQDHSFKTKSRKGPSPSWNEEIPVKWSLGDELRISAVTSNLLGHTKLGEAVFQEDAIGTFRVVIGGSSSVEIKVEAE.

Disordered regions lie at residues 1–76 (MEGE…SGIE) and 103–130 (PAGAAESAQNANLISSKSENVPEPAGEK). The span at 14–29 (SHSTSVVSERASSSGV) shows a compositional bias: low complexity. Residues 109 to 121 (SAQNANLISSKSE) show a composition bias toward polar residues. 2 consecutive transmembrane segments (helical) span residues 197–217 (LTGQWWQSTSILLAVSILSWI) and 225–245 (FFILFFIIITGTIVYGSCMIS). An SMP-LTD domain is found at 266 to 471 (DYETMSWFNT…WPNMFDYDLS (206 aa)). C2 domains follow at residues 462–584 (WPNM…GDIY) and 738–858 (TPVD…DRSA). The segment at 899 to 932 (NTDNSSKQSSENVQSATDPTTPAKDNSTSNAETS) is disordered. The 118-residue stretch at 1060–1177 (TYMPVPMTLN…EPNVESQQSI (118 aa)) folds into the C2 3 domain. The tract at residues 1280-1303 (EKNPSRSDLTTTQEASSSASVPPA) is disordered. Residues 1294 to 1303 (ASSSASVPPA) show a composition bias toward low complexity.

The protein resides in the membrane. This is an uncharacterized protein from Schizosaccharomyces pombe (strain 972 / ATCC 24843) (Fission yeast).